The primary structure comprises 161 residues: Phosphopantetheine adenylyltransferase (161 aa).

Residue Thr-10 participates in substrate binding. ATP-binding positions include 10-11 (TF) and His-18. Residues Lys-42, Met-74, and Arg-88 each contribute to the substrate site. Residues 89–91 (GVR), Glu-99, and 124–130 (LSFVSSS) each bind ATP.

This sequence belongs to the bacterial CoaD family. Homohexamer. The cofactor is Mg(2+).

The protein localises to the cytoplasm. It carries out the reaction (R)-4'-phosphopantetheine + ATP + H(+) = 3'-dephospho-CoA + diphosphate. It participates in cofactor biosynthesis; coenzyme A biosynthesis; CoA from (R)-pantothenate: step 4/5. Reversibly transfers an adenylyl group from ATP to 4'-phosphopantetheine, yielding dephospho-CoA (dPCoA) and pyrophosphate. This chain is Phosphopantetheine adenylyltransferase, found in Proteus mirabilis (strain HI4320).